Here is a 386-residue protein sequence, read N- to C-terminus: Protein phosphatase methylesterase 1 (386 aa).

A disordered region spans residues 1–38 (MSALEKSMHLGRLPSRPPLPGSGGSQSGAKMRMGPGRK). A Phosphoserine modification is found at serine 15. Arginine 16 bears the Asymmetric dimethylarginine; alternate mark. Position 16 is an omega-N-methylarginine; alternate (arginine 16). The residue at position 42 (serine 42) is a Phosphoserine. Serine 156 is an active-site residue. Acidic residues predominate over residues 254–265 (IIEEEEEDEEGS). The segment at 254–280 (IIEEEEEDEEGSESISKRKKEDDMETK) is disordered. Over residues 268-280 (ISKRKKEDDMETK) the composition is skewed to basic and acidic residues. The active site involves histidine 349.

The protein belongs to the AB hydrolase superfamily. As to quaternary structure, binds PPP2CA and PPP2CB. Phosphorylated by SIK1 following increases in intracellular sodium, leading to dissociation from the protein phosphatase 2A (PP2A) complex and subsequent dephosphorylation of sodium/potassium-transporting ATPase ATP1A1.

It catalyses the reaction [phosphatase 2A protein]-C-terminal L-leucine methyl ester + H2O = [phosphatase 2A protein]-C-terminal L-leucine + methanol + H(+). Functionally, demethylates proteins that have been reversibly carboxymethylated. Demethylates PPP2CB (in vitro) and PPP2CA. Binding to PPP2CA displaces the manganese ion and inactivates the enzyme. In Pongo abelii (Sumatran orangutan), this protein is Protein phosphatase methylesterase 1 (PPME1).